The following is a 540-amino-acid chain: Putative F-box/LRR-repeat protein At5g41840 (540 aa).

The 49-residue stretch at 13–61 (GDRISGLPDALICHILSFLPTKEAASTTVLAKRWKPLLAFVPNLNFDDS) folds into the F-box domain. 7 LRR repeats span residues 80 to 105 (FMSF…HVKC), 137 to 165 (RNYC…KIQF), 189 to 214 (YFKI…VLAN), 217 to 242 (WADS…NFCR), 254 to 282 (YEDY…EYSD), 329 to 360 (ILYL…TIKT), and 361 to 386 (TPYV…VFEG).

This Arabidopsis thaliana (Mouse-ear cress) protein is Putative F-box/LRR-repeat protein At5g41840.